A 239-amino-acid chain; its full sequence is uncharacterized protein (239 aa).

The signal sequence occupies residues 1-23; that stretch reads MKTMVAMLLAAVGVAVSASSTLA. A compositionally biased stretch (basic and acidic residues) spans 220-230; it reads AHPKQTLRDQR. The disordered stretch occupies residues 220-239; it reads AHPKQTLRDQRPAGGDEITK.

This is an uncharacterized protein from Sinorhizobium fredii (strain NBRC 101917 / NGR234).